Consider the following 81-residue polypeptide: Defensin-like protein 153 (81 aa).

The N-terminal stretch at 1–26 (MKNVSQVSVAVLLIFSILVLGIGVQG) is a signal peptide. 4 cysteine pairs are disulfide-bonded: Cys-30–Cys-81, Cys-41–Cys-60, Cys-46–Cys-75, and Cys-50–Cys-77.

It belongs to the DEFL family.

The protein resides in the secreted. The chain is Defensin-like protein 153 (LCR31) from Arabidopsis thaliana (Mouse-ear cress).